Here is a 297-residue protein sequence, read N- to C-terminus: F-box only protein 2 (297 aa).

The tract at residues 1–47 (MDGDGDPESVSHPEEASPEEQPEEAGAEASAEEEQLREAEEEEEAEA) is disordered. Residues 16–47 (ASPEEQPEEAGAEASAEEEQLREAEEEEEAEA) are compositionally biased toward acidic residues. The 48-residue stretch at 48 to 95 (VEYLAELPEPLLLRVLAELPATELVQACRLVCLRWKELVDGAPLWLLK) folds into the F-box domain. Position 106 is a phosphoserine (Ser-106). One can recognise an FBA domain in the interval 117 to 297 (FYFLSKRRRN…VTNSSVWVEP (181 aa)). A carbohydrate is bound by residues 214 to 216 (RTD) and 279 to 280 (YW).

Component of the SCF(FBXO2) complex consisting of CUL1, RBX1, SKP1 and FBXO2. Predominantly detected as heterodimer with SKP1; the heterodimer with SKP1 is not part of the SCF(FBXO2) complex. In terms of tissue distribution, detected in brain and cochlea, in epithelial support cells and hair cells of the organ of Corti (at protein level).

The protein localises to the cytoplasm. Its subcellular location is the microsome membrane. Its pathway is protein modification; protein ubiquitination. Substrate recognition component of a SCF (SKP1-CUL1-F-box protein) E3 ubiquitin-protein ligase complex that mediates the ubiquitination and subsequent proteasomal degradation of target proteins. Involved in the endoplasmic reticulum-associated degradation pathway (ERAD) for misfolded lumenal proteins by recognizing and binding sugar chains on unfolded glycoproteins that are retrotranslocated into the cytosol and promoting their ubiquitination and subsequent degradation. Prevents formation of cytosolic aggregates of unfolded glycoproteins that have been retrotranslocated into the cytosol. Able to recognize and bind denatured glycoproteins, preferentially those of the high-mannose type. This chain is F-box only protein 2 (Fbxo2), found in Mus musculus (Mouse).